A 1081-amino-acid chain; its full sequence is Carbamoyl phosphate synthase large chain (1081 aa).

The carboxyphosphate synthetic domain stretch occupies residues 1–410 (MPKRTDIKTI…SFQKALRGLE (410 aa)). The ATP site is built by Arg-129, Arg-176, Gly-182, Gly-183, Glu-215, Leu-217, Glu-222, Gly-248, Ile-249, His-250, Gln-292, and Glu-306. In terms of domain architecture, ATP-grasp 1 spans 133 to 335 (KEAMTKIGLG…IAKVAAKLAV (203 aa)). Mg(2+) contacts are provided by Gln-292, Glu-306, and Asn-308. Residues Gln-292, Glu-306, and Asn-308 each coordinate Mn(2+). Residues 411-558 (VGVDGLDEKS…YEAEHGECEA (148 aa)) are oligomerization domain. Positions 559–944 (DPTERKKIMV…ALFKSQLAAG (386 aa)) are carbamoyl phosphate synthetic domain. Positions 683–878 (QKLLHDLGLR…LAKVAARCMA (196 aa)) constitute an ATP-grasp 2 domain. Residues Arg-719, Arg-758, Leu-760, Glu-765, Gly-790, Val-791, His-792, Ser-793, Gln-833, and Glu-849 each contribute to the ATP site. The Mg(2+) site is built by Gln-833, Glu-849, and Asn-851. Gln-833, Glu-849, and Asn-851 together coordinate Mn(2+). One can recognise an MGS-like domain in the interval 945-1081 (SRLPEKGTVL…YDLQGLHASL (137 aa)). Residues 945 to 1081 (SRLPEKGTVL…YDLQGLHASL (137 aa)) are allosteric domain.

This sequence belongs to the CarB family. Composed of two chains; the small (or glutamine) chain promotes the hydrolysis of glutamine to ammonia, which is used by the large (or ammonia) chain to synthesize carbamoyl phosphate. Tetramer of heterodimers (alpha,beta)4. Mg(2+) serves as cofactor. It depends on Mn(2+) as a cofactor.

It catalyses the reaction hydrogencarbonate + L-glutamine + 2 ATP + H2O = carbamoyl phosphate + L-glutamate + 2 ADP + phosphate + 2 H(+). The catalysed reaction is hydrogencarbonate + NH4(+) + 2 ATP = carbamoyl phosphate + 2 ADP + phosphate + 2 H(+). It participates in amino-acid biosynthesis; L-arginine biosynthesis; carbamoyl phosphate from bicarbonate: step 1/1. It functions in the pathway pyrimidine metabolism; UMP biosynthesis via de novo pathway; (S)-dihydroorotate from bicarbonate: step 1/3. Functionally, large subunit of the glutamine-dependent carbamoyl phosphate synthetase (CPSase). CPSase catalyzes the formation of carbamoyl phosphate from the ammonia moiety of glutamine, carbonate, and phosphate donated by ATP, constituting the first step of 2 biosynthetic pathways, one leading to arginine and/or urea and the other to pyrimidine nucleotides. The large subunit (synthetase) binds the substrates ammonia (free or transferred from glutamine from the small subunit), hydrogencarbonate and ATP and carries out an ATP-coupled ligase reaction, activating hydrogencarbonate by forming carboxy phosphate which reacts with ammonia to form carbamoyl phosphate. The chain is Carbamoyl phosphate synthase large chain from Ralstonia nicotianae (strain ATCC BAA-1114 / GMI1000) (Ralstonia solanacearum).